The chain runs to 851 residues: Protein NUD1 (851 aa).

2 disordered regions span residues 1-31 (MDMD…NAHS) and 216-352 (LVGS…KAPS). Residues 8–21 (AELSSQLENLTINS) are compositionally biased toward polar residues. Composition is skewed to low complexity over residues 223-246 (NSNN…INNK) and 260-278 (SNSF…QTQS). A compositionally biased stretch (polar residues) spans 291-304 (NTISPGQLGYQFNH). Residues 320 to 333 (SSSHSLDNTSSNQS) are compositionally biased toward low complexity. A Glycyl lysine isopeptide (Lys-Gly) (interchain with G-Cter in ubiquitin) cross-link involves residue K357. A phosphothreonine mark is found at T388 and T392. 2 positions are modified to phosphoserine: S417 and S419. LRR repeat units lie at residues 544–566 (DLEC…SLCH), 567–588 (HLQE…GSSR), 589–609 (MKKL…EQLI), 621–642 (TVEV…NCLP), and 643–664 (RLKV…SKME).

In terms of assembly, interacts directly with MPC54, CNM67, SPO21/MPC70, ADY3 and ADY4. Probable component of a spindle pole boby (SPB) complex composed of ADY3, SSP1, DON1, MPC54, SPO21/MPC70, NUD1 and CNM67. In terms of processing, phosphorylated from S/G2 phase until the end of mitosis.

The protein localises to the cytoplasm. Its subcellular location is the cytoskeleton. It is found in the microtubule organizing center. It localises to the spindle pole body. The protein resides in the nucleus envelope. In terms of biological role, involved in astral microtubule organization by binding SCP72 to the outer plaque in a cell-cycle dependent manner. Required for the mitotic exit by facilitating the binding of TEMP1 to CDC15. Also involved in the pathway that organizes the shaping and sizing of the prospore membrane (PSM) during sporulation. This Saccharomyces cerevisiae (strain ATCC 204508 / S288c) (Baker's yeast) protein is Protein NUD1 (NUD1).